Consider the following 284-residue polypeptide: 4-diphosphocytidyl-2-C-methyl-D-erythritol kinase (284 aa).

Residue lysine 14 is part of the active site. 98–108 (PMGGGLGGGSS) is a binding site for ATP. Aspartate 140 is a catalytic residue.

It belongs to the GHMP kinase family. IspE subfamily.

The enzyme catalyses 4-CDP-2-C-methyl-D-erythritol + ATP = 4-CDP-2-C-methyl-D-erythritol 2-phosphate + ADP + H(+). The protein operates within isoprenoid biosynthesis; isopentenyl diphosphate biosynthesis via DXP pathway; isopentenyl diphosphate from 1-deoxy-D-xylulose 5-phosphate: step 3/6. Functionally, catalyzes the phosphorylation of the position 2 hydroxy group of 4-diphosphocytidyl-2C-methyl-D-erythritol. The polypeptide is 4-diphosphocytidyl-2-C-methyl-D-erythritol kinase (Shewanella baltica (strain OS195)).